The primary structure comprises 227 residues: RNA pyrophosphohydrolase (227 aa).

One can recognise a Nudix hydrolase domain in the interval 6–149 (GFRPNVGIIL…KRDVYQMALT (144 aa)). Positions 38 to 59 (GGIKYGETPEQAMYRELHEEIG) match the Nudix box motif. Residues 165 to 227 (PYGTHGAHGA…PVSTTRSTDD (63 aa)) form a disordered region. Over residues 192–201 (AQAAQQADAD) the composition is skewed to low complexity. The span at 217 to 227 (TPVSTTRSTDD) shows a compositional bias: polar residues.

Belongs to the Nudix hydrolase family. RppH subfamily. A divalent metal cation serves as cofactor.

Accelerates the degradation of transcripts by removing pyrophosphate from the 5'-end of triphosphorylated RNA, leading to a more labile monophosphorylated state that can stimulate subsequent ribonuclease cleavage. The chain is RNA pyrophosphohydrolase from Cupriavidus taiwanensis (strain DSM 17343 / BCRC 17206 / CCUG 44338 / CIP 107171 / LMG 19424 / R1) (Ralstonia taiwanensis (strain LMG 19424)).